Reading from the N-terminus, the 427-residue chain is Enolase (427 aa).

Gln163 is a (2R)-2-phosphoglycerate binding site. Glu205 serves as the catalytic Proton donor. Mg(2+) contacts are provided by Asp242, Glu285, and Asp312. (2R)-2-phosphoglycerate contacts are provided by Lys337, Arg366, Ser367, and Lys388. Residue Lys337 is the Proton acceptor of the active site.

Belongs to the enolase family. Requires Mg(2+) as cofactor.

It is found in the cytoplasm. The protein localises to the secreted. Its subcellular location is the cell surface. It catalyses the reaction (2R)-2-phosphoglycerate = phosphoenolpyruvate + H2O. It functions in the pathway carbohydrate degradation; glycolysis; pyruvate from D-glyceraldehyde 3-phosphate: step 4/5. Its function is as follows. Catalyzes the reversible conversion of 2-phosphoglycerate (2-PG) into phosphoenolpyruvate (PEP). It is essential for the degradation of carbohydrates via glycolysis. This chain is Enolase, found in Rhodopseudomonas palustris (strain HaA2).